Consider the following 251-residue polypeptide: Triosephosphate isomerase (251 aa).

Substrate is bound at residue 9–11 (NWK). The Electrophile role is filled by histidine 95. Glutamate 167 acts as the Proton acceptor in catalysis. Residues glycine 173, serine 213, and 234-235 (GG) contribute to the substrate site. Serine 213 carries the post-translational modification Phosphoserine.

This sequence belongs to the triosephosphate isomerase family. Homodimer.

Its subcellular location is the cytoplasm. It carries out the reaction D-glyceraldehyde 3-phosphate = dihydroxyacetone phosphate. It participates in carbohydrate biosynthesis; gluconeogenesis. Its pathway is carbohydrate degradation; glycolysis; D-glyceraldehyde 3-phosphate from glycerone phosphate: step 1/1. Functionally, involved in the gluconeogenesis. Catalyzes stereospecifically the conversion of dihydroxyacetone phosphate (DHAP) to D-glyceraldehyde-3-phosphate (G3P). The chain is Triosephosphate isomerase from Anoxybacillus flavithermus (strain DSM 21510 / WK1).